The sequence spans 265 residues: uncharacterized protein (265 aa).

A signal peptide spans 1 to 20 (MSRAMALFFVLCWIQDEIVL). A helical membrane pass occupies residues 192–212 (IIAAVSGVAILMAIVLLLLGL).

It localises to the membrane. This is an uncharacterized protein from Homo sapiens (Human).